The following is a 520-amino-acid chain: 1,4-alpha-glucan branching enzyme TTHA1902 (520 aa).

E184 serves as the catalytic Nucleophile. Positions 265 and 282 each coordinate substrate. The active-site Proton donor is D353. Residues W404, D460, and Q469 each coordinate substrate.

It belongs to the glycosyl hydrolase 57 family.

The catalysed reaction is Transfers a segment of a (1-&gt;4)-alpha-D-glucan chain to a primary hydroxy group in a similar glucan chain.. It participates in glycan biosynthesis; glycogen biosynthesis. Its function is as follows. Catalyzes the formation of branch points in alpha-glucans by cleavage of an alpha-1,4 glycosidic bond and subsequent transfer of the cleaved-off oligosaccharide to a new alpha-1,6 position. The branch chain-length distribution of the reaction products shows degree of polymerization (DP) of 3 to 13, with two local maxima at DP 7 and DP 11. Exhibits an alpha-retaining catalytic mechanism. Is involved in glycogen biosynthesis. Shows a secondary activity, i.e. the hydrolysis of the substrate, being 4% of the total activity. Can use amylose as substrate but not alpha-1,4-linked oligosaccharides of 2-7 glucose residues, beta-cyclodextrin, 6-O-glucosyl-beta-cyclodextrin and 6-O-maltosyl-beta-cyclodextrin. Is not able to branch amylopectin further, it only hydrolyzes amylopectin. Thus, displays preference for linear and long substrates (amylose) over branched structures (amylopectin). The protein is 1,4-alpha-glucan branching enzyme TTHA1902 of Thermus thermophilus (strain ATCC 27634 / DSM 579 / HB8).